Here is an 81-residue protein sequence, read N- to C-terminus: Dermaseptin-B2 (81 aa).

An N-terminal signal peptide occupies residues Met1–Cys22. Residues Glu23–Met43 constitute a propeptide that is removed on maturation. The segment at Glu24 to Gly46 is disordered. Acidic residues predominate over residues Glu30–Gln40. Positions Val54–Gly55 are hinge region that separates the two alpha-helices that constitute the peptide. A Valine amide modification is found at Val78. The propeptide occupies Glu80 to Gln81.

In terms of processing, amidation permits an increased antimicrobial activity against some microorganisms such as T.album and S.cerevisiae. May contain a D-amino acid residue, since the natural peptide is not identical in chromatographic properties to the synthetic peptide. As to expression, expressed by the skin glands.

It localises to the secreted. The protein resides in the target cell membrane. Its function is as follows. Cationic amphipathic alpha-helical antimicrobial peptide with potent activity against Gram-negative and Gram-positive bacteria, fungi and protozoa. Acts in a synergistic effect in combination with Plasticin-B1 at doses that are not active alone. Acts by disturbing membrane functions. On model membranes, induces a strong perturbation of anionic lipid bilayers, resides at the hydrocarbon core-water interface, parallel to the plane of the membrane, and interacts preferentially with the polar head groups and glycerol backbone region of the anionic phospholipids, as well as the region of the lipid acyl chain near the bilayer surface. Induces a positive curvature of the bilayer and clustering of anionic lipids, consistent with a carpet mechanism, that may lead to the formation of mixed peptide-phospholipid toroidal, transient pores and membrane permeation/disruption once a threshold peptide accumulation is reached. Also enhances binding of agonists to adenosine A1 receptors (ADORA1), adenosine A2a receptors (ADORA2A), alpha-2 adrenergic receptors (ADRA2A) and 5-hydroxytryptamine 1A receptors (HTR1A). In addition, it enhances guanyl nucleotide exchange which may result in the conversion of receptors to a high affinity state complexed with guanyl nucleotide free G-protein. Affects human behavior eliciting profound malaise, followed by listlessness and then euphoria. Does not show cytotoxic activity on CHO cells. Does not act as a chemoattractant. Does not show hemolytic activity. This Phyllomedusa bicolor (Two-colored leaf frog) protein is Dermaseptin-B2 (ADR).